Reading from the N-terminus, the 541-residue chain is Membrane protein insertase YidC (541 aa).

Helical transmembrane passes span 6–26 (NILLIGLLFVSFLLWQQWQAD), 325–345 (LVVDYGFLWWLAVPIHWLLMF), 349–369 (FVGNWGMAIILITLTVRGLLF), 420–440 (GGCLPIILQMPIFIALYWVLL), 457–477 (LSVQDPYYILPLLMGVSMFVM), and 500–520 (VIFTVFFLWFPAGLVLYWLVG).

The protein belongs to the OXA1/ALB3/YidC family. Type 1 subfamily. In terms of assembly, interacts with the Sec translocase complex via SecD. Specifically interacts with transmembrane segments of nascent integral membrane proteins during membrane integration.

The protein localises to the cell inner membrane. Functionally, required for the insertion and/or proper folding and/or complex formation of integral membrane proteins into the membrane. Involved in integration of membrane proteins that insert both dependently and independently of the Sec translocase complex, as well as at least some lipoproteins. Aids folding of multispanning membrane proteins. The sequence is that of Membrane protein insertase YidC from Shewanella baltica (strain OS223).